Consider the following 563-residue polypeptide: Cytidine monophosphate-N-acetylneuraminic acid hydroxylase (563 aa).

The Rieske domain occupies 10–108; the sequence is LSPAETANLK…VEMDGNDGLF (99 aa). The [2Fe-2S] cluster site is built by Cys-50, His-52, Cys-71, and His-74.

The protein belongs to the CMP-Neu5Ac hydroxylase family. The cofactor is [2Fe-2S] cluster.

The protein localises to the cytoplasm. It catalyses the reaction CMP-N-acetyl-beta-neuraminate + 2 Fe(II)-[cytochrome b5] + O2 + 2 H(+) = CMP-N-glycoloyl-beta-neuraminate + 2 Fe(III)-[cytochrome b5] + H2O. It participates in amino-sugar metabolism; N-acetylneuraminate metabolism. In terms of biological role, sialic acids are components of carbohydrate chains of glycoconjugates and are involved in cell-cell recognition and cell-pathogen interactions. Catalyzes the conversion of CMP-N-acetylneuraminic acid (CMP-Neu5Ac) into its hydroxylated derivative CMP-N-glycolylneuraminic acid (CMP-Neu5Gc), a sialic acid abundantly expressed at the surface of many cells. The chain is Cytidine monophosphate-N-acetylneuraminic acid hydroxylase (CMAH) from Cricetulus griseus (Chinese hamster).